Reading from the N-terminus, the 567-residue chain is Organic cation transporter-like protein (567 aa).

The Cytoplasmic portion of the chain corresponds to 1–21 (MGYDEAIIHLGDFGRYQKIIY). The helical transmembrane segment at 22-42 (FLICLTSIPVAFHKLAGVFLL) threads the bilayer. Over 43–127 (AKPDFRCALP…TEWNLVCGRD (85 aa)) the chain is Extracellular. Asn55, Asn67, Asn89, and Asn97 each carry an N-linked (GlcNAc...) asparagine glycan. A helical membrane pass occupies residues 128 to 148 (FMAATSDSLFMLGVLLGSIVF). At 149–158 (GQLSDKYGRK) the chain is on the cytoplasmic side. A helical transmembrane segment spans residues 159–179 (PILFASLVIQVLFGVLAGVAP). Residues 180–189 (EYFTYTFARL) lie on the Extracellular side of the membrane. The chain crosses the membrane as a helical span at residues 190 to 210 (MVGATTSGVFLVAYVVAMEMV). The Cytoplasmic portion of the chain corresponds to 211–219 (GPDKRLYAG). A helical transmembrane segment spans residues 220 to 240 (IFVMMFFSVGFMLTAVFAYFV). Topologically, residues 241–244 (HDWR) are extracellular. Residues 245–265 (WLQIALTLPGLIFMFYYWIIP) form a helical membrane-spanning segment. The Cytoplasmic portion of the chain corresponds to 266–343 (ESARWLLLKG…LFCYPNLRRK (78 aa)). The interval 304–326 (LDEGENSEEKAKQKLEDQELDEG) is disordered. Basic and acidic residues predominate over residues 310 to 320 (SEEKAKQKLED). Residues 344–364 (TLLIFLDWLVTSGVYYGLSWN) form a helical membrane-spanning segment. The Extracellular portion of the chain corresponds to 365–371 (TSNLGGN). Residues 372 to 392 (VLLNFVISGAVEIPAYIFLLL) form a helical membrane-spanning segment. The Cytoplasmic segment spans residues 393–400 (TLNRWGRR). A helical membrane pass occupies residues 401–421 (SILCGCLVMAGLSLLATVIIP). Over 422 to 427 (QRMHTL) the chain is Extracellular. The helical transmembrane segment at 428–448 (IVACAMLGKLAITASYGTVYI) threads the bilayer. Residues 449-462 (FSAEQFPTVVRNVA) lie on the Cytoplasmic side of the membrane. Residues 463–483 (LGAASMVARISGMMAPFLNFL) traverse the membrane as a helical segment. Topologically, residues 484 to 489 (ATIWKP) are extracellular. Residues 490–510 (LPLLICGSLTLVAGLLSLLLP) form a helical membrane-spanning segment. Topologically, residues 511-567 (ETHNKPMLETIADGERFGKKTKADVYLETGQELRAPEAQPLKGSGETNGSTIANGHK) are cytoplasmic. Residues 546–567 (PEAQPLKGSGETNGSTIANGHK) are disordered. Residues 555–567 (GETNGSTIANGHK) are compositionally biased toward polar residues.

Belongs to the major facilitator (TC 2.A.1) superfamily. Organic cation transporter (TC 2.A.1.19) family.

The protein resides in the membrane. In terms of biological role, probably transports organic cations. In Drosophila melanogaster (Fruit fly), this protein is Organic cation transporter-like protein (Orct2).